A 355-amino-acid polypeptide reads, in one-letter code: Endonuclease III homolog (355 aa).

The Nuclear localization signal signature appears at 44–50 (PKKFRFQ). Positions 122 to 149 (FQGDIPDTVEDLMTLPGVGPKMGYLCMS) constitute a HhH domain. Lys142 functions as the Nucleophile; for N-glycosylase activity in the catalytic mechanism. Residues Cys210, Cys217, Cys220, and Cys228 each coordinate [4Fe-4S] cluster. A Nuclear localization signal motif is present at residues 252–255 (KKRP). The tract at residues 303-355 (KEPAADIDVDQKPPVAFHSTTKETRSLRRSKRVAKKSSQYFSQQSLQDIEDLV) is disordered. Over residues 338–349 (KSSQYFSQQSLQ) the composition is skewed to polar residues.

It belongs to the Nth/MutY family. Requires [4Fe-4S] cluster as cofactor.

It is found in the nucleus. The protein localises to the mitochondrion. It carries out the reaction 2'-deoxyribonucleotide-(2'-deoxyribose 5'-phosphate)-2'-deoxyribonucleotide-DNA = a 3'-end 2'-deoxyribonucleotide-(2,3-dehydro-2,3-deoxyribose 5'-phosphate)-DNA + a 5'-end 5'-phospho-2'-deoxyribonucleoside-DNA + H(+). Functionally, bifunctional DNA N-glycosylase with associated apurinic/apyrimidinic (AP) lyase function that catalyzes the first step in base excision repair (BER), the primary repair pathway for the repair of oxidative DNA damage. The DNA N-glycosylase activity releases the damaged DNA base from DNA by cleaving the N-glycosidic bond, leaving an AP site. The AP-lyase activity cleaves the phosphodiester bond 3' to the AP site by a beta-elimination. Primarily recognizes and repairs oxidative base damage of pyrimidines. Also has 8-oxo-7,8-dihydroguanine (8-oxoG) DNA glycosylase activity. Also involved in the repair of 7-methylguanine lesions, although it cannot directly repair alkylated DNA bases. Probably does so via excision of methylformamidopyrimidine (mFapy) lesions, a spontaneous processing product of 7-methylguanine. This is Endonuclease III homolog (nth1) from Schizosaccharomyces pombe (strain 972 / ATCC 24843) (Fission yeast).